Reading from the N-terminus, the 134-residue chain is Small ribosomal subunit protein uS11 (134 aa).

The protein belongs to the universal ribosomal protein uS11 family. Part of the 30S ribosomal subunit. Interacts with proteins S7 and S18. Binds to IF-3.

Its function is as follows. Located on the platform of the 30S subunit, it bridges several disparate RNA helices of the 16S rRNA. Forms part of the Shine-Dalgarno cleft in the 70S ribosome. The chain is Small ribosomal subunit protein uS11 from Paraburkholderia xenovorans (strain LB400).